The primary structure comprises 137 residues: MNDGQFLFQRNDPIILYTFLLKSNYTVFRSIDERLCDFVFYIDHFLNKRISYRIPILIRNNNTNILNNCPSSFPPLVDLVGHRLVAAEDNPVAVDLVDNNLVVVDLVDNNLAVGVLVGSNLVVGSLVFALLTCFEDG.

Residues L111–L131 form a helical membrane-spanning segment.

It localises to the membrane. This is an uncharacterized protein from Saccharomyces cerevisiae (strain ATCC 204508 / S288c) (Baker's yeast).